The chain runs to 719 residues: MQEPAITPDLIAAHGLKPEEYDMILEIIGREPTFTELGIFSAMWNEHCSYKSSKKWLRTLPTSGPQVICGPGENAGVVDIGDGQAVVFKMESHNHPSYIEPYQGAATGVGGILRDVFTMGARPIASMNALSFGEPSHPKTRQLVNGVVEGIGGYGNCFGVPCVGGEVRFHPAYNGNCLVNAFAAGLADSDKIFYSAASGVGMPVVYLGAKTGRDGVGGATMASAEFDDTIEEKRPTVQVGDPFTEKRLMEATLELMQTGAVISIQDMGAAGLTCSAVEMGDKGGLGVRLDLENVPQREENMTAYEMMLSESQERMLMVLKPELEAEARAVFEKWDLDFAIVGETIAEDRFLIMHHGEVKADLVLSKLSSTAPEYDRPWVPTPAAEPLAEVPQIDPIDGLRALLASPNYGGKQWVYEQYDTMVMADSARTPGLGAGIVRVHGTDKALAFTSDVTPRYVRANPEEGGKQAVAEAYRNLTAVGARPLATTDNLNFGNPEKPEIMGQFVGAIKGIGAACAALDMPIVSGNVSLYNETDGTAILPTPTIGAVGLLASTDEIIGKEVREGHVALVVGETTGHLGQSALLAEVFNREDGDAPHVDLEAERRNGDFIRANRALIKACTDLGDGGLALAAFELAEGAGVGLHLDDAPTEILFGEDQARYLVACNFDQAEALMSAAGQTGVTVTSVGRFTGDTVRIGGSEALLADLAATFRASFAAAVA.

His-47 is an active-site residue. The ATP site is built by Tyr-50 and Lys-89. Mg(2+) is bound at residue Glu-91. Residues 92 to 95 and Arg-114 each bind substrate; that span reads SHNH. The active-site Proton acceptor is His-93. Residue Asp-115 participates in Mg(2+) binding. Position 238 (Gln-238) interacts with substrate. Asp-266 lines the Mg(2+) pocket. A substrate-binding site is contributed by 310–312; that stretch reads ESQ. Positions 488 and 525 each coordinate ATP. Residue Asn-526 coordinates Mg(2+). Ser-528 serves as a coordination point for substrate.

It belongs to the FGAMS family. In terms of assembly, monomer. Part of the FGAM synthase complex composed of 1 PurL, 1 PurQ and 2 PurS subunits.

It localises to the cytoplasm. It catalyses the reaction N(2)-formyl-N(1)-(5-phospho-beta-D-ribosyl)glycinamide + L-glutamine + ATP + H2O = 2-formamido-N(1)-(5-O-phospho-beta-D-ribosyl)acetamidine + L-glutamate + ADP + phosphate + H(+). It functions in the pathway purine metabolism; IMP biosynthesis via de novo pathway; 5-amino-1-(5-phospho-D-ribosyl)imidazole from N(2)-formyl-N(1)-(5-phospho-D-ribosyl)glycinamide: step 1/2. Its function is as follows. Part of the phosphoribosylformylglycinamidine synthase complex involved in the purines biosynthetic pathway. Catalyzes the ATP-dependent conversion of formylglycinamide ribonucleotide (FGAR) and glutamine to yield formylglycinamidine ribonucleotide (FGAM) and glutamate. The FGAM synthase complex is composed of three subunits. PurQ produces an ammonia molecule by converting glutamine to glutamate. PurL transfers the ammonia molecule to FGAR to form FGAM in an ATP-dependent manner. PurS interacts with PurQ and PurL and is thought to assist in the transfer of the ammonia molecule from PurQ to PurL. In Ruegeria pomeroyi (strain ATCC 700808 / DSM 15171 / DSS-3) (Silicibacter pomeroyi), this protein is Phosphoribosylformylglycinamidine synthase subunit PurL.